We begin with the raw amino-acid sequence, 213 residues long: Probable GTP-binding protein EngB (213 aa).

Residues serine 30–isoleucine 204 form the EngB-type G domain. GTP-binding positions include glycine 38 to serine 45, glycine 65 to leucine 69, aspartate 83 to glycine 86, threonine 150 to aspartate 153, and isoleucine 183 to alanine 185. Mg(2+)-binding residues include serine 45 and threonine 67.

The protein belongs to the TRAFAC class TrmE-Era-EngA-EngB-Septin-like GTPase superfamily. EngB GTPase family. It depends on Mg(2+) as a cofactor.

In terms of biological role, necessary for normal cell division and for the maintenance of normal septation. This is Probable GTP-binding protein EngB from Leptospira biflexa serovar Patoc (strain Patoc 1 / Ames).